Reading from the N-terminus, the 772-residue chain is Phenylalanine--tRNA ligase beta subunit (772 aa).

Residues 40 to 158 (IKPSTNLVFA…DHYKTPNQIF (119 aa)) form the tRNA-binding domain. Residues 397 to 468 (SVHNVIKNKI…KKISIQEIKP (72 aa)) enclose the B5 domain. Positions 446, 452, 455, and 456 each coordinate Mg(2+). The FDX-ACB domain maps to 691 to 772 (SMYHDVIRDI…QEVNNYLKQF (82 aa)).

The protein belongs to the phenylalanyl-tRNA synthetase beta subunit family. Type 1 subfamily. Tetramer of two alpha and two beta subunits. The cofactor is Mg(2+).

Its subcellular location is the cytoplasm. The catalysed reaction is tRNA(Phe) + L-phenylalanine + ATP = L-phenylalanyl-tRNA(Phe) + AMP + diphosphate + H(+). This is Phenylalanine--tRNA ligase beta subunit (pheT) from Ureaplasma parvum serovar 3 (strain ATCC 700970).